Here is a 497-residue protein sequence, read N- to C-terminus: UDP-N-acetylmuramoyl-L-alanyl-D-glutamate--2,6-diaminopimelate ligase (497 aa).

A UDP-N-acetyl-alpha-D-muramoyl-L-alanyl-D-glutamate-binding site is contributed by Ser29. 116–122 (GTNGKTT) serves as a coordination point for ATP. UDP-N-acetyl-alpha-D-muramoyl-L-alanyl-D-glutamate is bound by residues Asn157, 158–159 (TT), Ser185, Gln191, and Arg193. At Lys225 the chain carries N6-carboxylysine. Residues Arg392, 416-419 (DNPR), Gly467, and Glu471 each bind meso-2,6-diaminopimelate. A Meso-diaminopimelate recognition motif motif is present at residues 416-419 (DNPR).

Belongs to the MurCDEF family. MurE subfamily. Mg(2+) serves as cofactor. In terms of processing, carboxylation is probably crucial for Mg(2+) binding and, consequently, for the gamma-phosphate positioning of ATP.

It localises to the cytoplasm. The enzyme catalyses UDP-N-acetyl-alpha-D-muramoyl-L-alanyl-D-glutamate + meso-2,6-diaminopimelate + ATP = UDP-N-acetyl-alpha-D-muramoyl-L-alanyl-gamma-D-glutamyl-meso-2,6-diaminopimelate + ADP + phosphate + H(+). Its pathway is cell wall biogenesis; peptidoglycan biosynthesis. Catalyzes the addition of meso-diaminopimelic acid to the nucleotide precursor UDP-N-acetylmuramoyl-L-alanyl-D-glutamate (UMAG) in the biosynthesis of bacterial cell-wall peptidoglycan. The chain is UDP-N-acetylmuramoyl-L-alanyl-D-glutamate--2,6-diaminopimelate ligase from Buchnera aphidicola subsp. Acyrthosiphon pisum (strain APS) (Acyrthosiphon pisum symbiotic bacterium).